The sequence spans 1193 residues: Probable DNA-directed RNA polymerase II subunit RPB2 homolog (1193 aa).

Position 808 (Asp-808) interacts with Mg(2+). The Zn(2+) site is built by Cys-1137, Cys-1140, Cys-1155, and Cys-1158. Residues 1137-1158 (CVPCKSYFKVVKTQNGFFCSGC) form a C4-type zinc finger.

The protein belongs to the RNA polymerase beta chain family.

It carries out the reaction RNA(n) + a ribonucleoside 5'-triphosphate = RNA(n+1) + diphosphate. Functionally, component of the DNA-dependent RNA polymerase that catalyzes the transcription of DNA into RNA using the four ribonucleoside triphosphates as substrates. Second largest component of RNA polymerase II which synthesizes mRNA precursors and many functional non-coding RNAs. Proposed to contribute to the polymerase catalytic activity and forms the polymerase active center together with the largest subunit. This is Probable DNA-directed RNA polymerase II subunit RPB2 homolog from Invertebrate iridescent virus 6 (IIV-6).